Here is a 94-residue protein sequence, read N- to C-terminus: Host-modulation protein 11K (94 aa).

In terms of assembly, interacts with host GRB2; this interaction alters host cell environment by modulating host signaling pathways.

Its subcellular location is the host cytoplasm. Its function is as follows. Enhances viral DNA replication and virion release. Mechansitically, optimizes viral DNA replication by interacting with host GRB2 to inhibit the negative effect of ERK signaling on B19 viral replication. Plays a role in viral infectivity. Induces apoptosis of primary erythroid progenitor cells. The chain is Host-modulation protein 11K (11K) from Human parvovirus B19 (strain HV) (HPV B19).